The chain runs to 378 residues: Glutamate 5-kinase (378 aa).

K20 provides a ligand contact to ATP. Substrate is bound by residues S60, D147, and N159. Residues 179-180 and 221-227 contribute to the ATP site; these read TD and TGGMLTK. Residues 286–364 form the PUA domain; it reads RGRVVLDDGA…SQIARILGSM (79 aa).

Belongs to the glutamate 5-kinase family.

Its subcellular location is the cytoplasm. It carries out the reaction L-glutamate + ATP = L-glutamyl 5-phosphate + ADP. The protein operates within amino-acid biosynthesis; L-proline biosynthesis; L-glutamate 5-semialdehyde from L-glutamate: step 1/2. In terms of biological role, catalyzes the transfer of a phosphate group to glutamate to form L-glutamate 5-phosphate. The protein is Glutamate 5-kinase of Bordetella pertussis (strain Tohama I / ATCC BAA-589 / NCTC 13251).